The primary structure comprises 430 residues: Histidine--tRNA ligase (430 aa).

The protein belongs to the class-II aminoacyl-tRNA synthetase family. In terms of assembly, homodimer.

It localises to the cytoplasm. It catalyses the reaction tRNA(His) + L-histidine + ATP = L-histidyl-tRNA(His) + AMP + diphosphate + H(+). The polypeptide is Histidine--tRNA ligase (Lactococcus lactis subsp. cremoris (strain MG1363)).